We begin with the raw amino-acid sequence, 81 residues long: Acylphosphatase (81 aa).

The region spanning 1-81 (MYIFHGRVQG…VKYNDFQIRY (81 aa)) is the Acylphosphatase-like domain. Residues arginine 14 and asparagine 32 contribute to the active site.

The protein belongs to the acylphosphatase family.

The enzyme catalyses an acyl phosphate + H2O = a carboxylate + phosphate + H(+). This chain is Acylphosphatase (acyP), found in Picrophilus torridus (strain ATCC 700027 / DSM 9790 / JCM 10055 / NBRC 100828 / KAW 2/3).